Reading from the N-terminus, the 551-residue chain is Cytochrome P450 monooxygenase sdnQ (551 aa).

Positions 1-23 are disordered; it reads MDDPSIASGFQQGTGRTTGANGT. Positions 8-23 are enriched in polar residues; the sequence is SGFQQGTGRTTGANGT. N-linked (GlcNAc...) asparagine glycosylation is present at Asn21. The chain crosses the membrane as a helical span at residues 41-57; it reads CIGTSLLVALLTTIIIY. Heme is bound at residue Cys491.

This sequence belongs to the cytochrome P450 family. The cofactor is heme.

The protein localises to the membrane. The protein operates within antibiotic biosynthesis. Cytochrome P450 monooxygenase; part of the gene cluster that mediates the biosynthesis of sordarin and hypoxysordarin, glycoside antibiotics with a unique tetracyclic diterpene aglycone structure. First, the geranylgeranyl diphosphate synthase sdnC constructs GGDP from farnesyl diphosphate and isopentenyl diphosphate. The diterpene cyclase sdnA then catalyzes the cyclization of GGDP to afford cycloaraneosene. Cycloaraneosene is then hydroxylated four times by the putative cytochrome P450 monooxygenases sdnB, sdnE, sdnF and sdnH to give a hydroxylated cycloaraneosene derivative such as cycloaraneosene-8,9,13,19-tetraol. Although the order of the hydroxylations is unclear, at least C8, C9 and C13 of the cycloaraneosene skeleton are hydroxylated before the sordaricin formation. Dehydration of the 13-hydroxy group of the hydroxylated cycloaraneosene derivative might be catalyzed by an unassigned hypothetical protein such as sdnG and sdnP to construct the cyclopentadiene moiety. The FAD-dependent oxidoreductase sdnN is proposed to catalyze the oxidation at C9 of the hydroxylated cycloaraneosene derivative and also catalyze the Baeyer-Villiger oxidation to give the lactone intermediate. The presumed lactone intermediate would be hydrolyzed to give an acrolein moiety and a carboxylate moiety. Then, [4+2]cycloaddition would occur between the acrolein moiety and the cyclopentadiene moiety to give sordaricin. SdnN might also be involved in the [4+2]cycloaddition after the hypothesized oxidation to accommodate the oxidized product and prompt the [4+2]cycloaddition. GDP-6-deoxy-D-altrose may be biosynthesized from GDP-D-mannose by the putative GDP-mannose-4,6-dehydratase sdnI and the short-chain dehydrogenase sdnK. The glycosyltransferase sdnJ catalyzes the attachment of 6-deoxy-D-altrose onto the 19-hydroxy group of sordaricin to give 4'-O-demethylsordarin. The methyltransferase sdnD would complete the biosynthesis of sordarin. Sordarin can be further modified into hypoxysordarin. The unique acyl chain at the 3'-hydroxy group of hypoxysordarin would be constructed by an iterative type I PKS sdnO and the trans-acting polyketide methyltransferase sdnL. SdnL would be responsible for the introduction of an alpha-methyl group of the polyketide chain. Alternatively, the beta-lactamase-like protein sdnR might be responsible for the cleavage and transfer of the polyketide chain from the PKS sdnO to sordarin. Two putative cytochrome P450 monooxygenases, sdnQ and sdnT, might catalyze the epoxidations of the polyketide chain to complete the biosynthesis of hypoxysordarin. Transcriptional regulators sdnM and sdnS are presumably encoded for the transcriptional regulation of the expression of the sdn gene cluster. The sequence is that of Cytochrome P450 monooxygenase sdnQ from Sordaria araneosa (Pleurage araneosa).